A 384-amino-acid polypeptide reads, in one-letter code: Galactokinase (384 aa).

Substrate is bound at residue Glu34–Asp37. Position 123 to 129 (Ser123 to Ser129) interacts with ATP. Mg(2+) is bound by residues Ser129 and Glu161. Catalysis depends on Asp173, which acts as the Proton acceptor. Tyr222 serves as a coordination point for substrate.

This sequence belongs to the GHMP kinase family. GalK subfamily.

The protein localises to the cytoplasm. It catalyses the reaction alpha-D-galactose + ATP = alpha-D-galactose 1-phosphate + ADP + H(+). The protein operates within carbohydrate metabolism; galactose metabolism. Functionally, catalyzes the transfer of the gamma-phosphate of ATP to D-galactose to form alpha-D-galactose-1-phosphate (Gal-1-P). This is Galactokinase from Actinobacillus pleuropneumoniae serotype 3 (strain JL03).